Here is an 85-residue protein sequence, read N- to C-terminus: Putative membrane protein insertion efficiency factor (85 aa).

Belongs to the UPF0161 family.

It localises to the cell inner membrane. Could be involved in insertion of integral membrane proteins into the membrane. This chain is Putative membrane protein insertion efficiency factor, found in Serratia proteamaculans (strain 568).